Consider the following 1100-residue polypeptide: DNA repair protein RAD1 (1100 aa).

The disordered stretch occupies residues methionine 1–glutamate 47. Polar residues predominate over residues arginine 20–lysine 30. Positions isoleucine 31–glutamate 47 are enriched in basic and acidic residues. A Phosphoserine modification is found at serine 613. Residues valine 821–glutamate 901 enclose the ERCC4 domain. A disordered region spans residues glutamate 1063 to valine 1100. The segment covering glutamate 1065 to leucine 1076 has biased composition (acidic residues). Serine 1071 carries the post-translational modification Phosphoserine. The residue at position 1072 (threonine 1072) is a Phosphothreonine. Over residues threonine 1082–valine 1100 the composition is skewed to basic and acidic residues.

The protein belongs to the XPF family. In terms of assembly, component of the nucleotide excision repair factor 1 (NEF1) complex consisting of RAD1, RAD10 and RAD14. Interacts with SAW1.

It localises to the nucleus. Its function is as follows. Involved in nucleotide excision repair of DNA damaged with UV light, bulky adducts, or cross-linking agents. Along with RAD10 forms an endonuclease that specifically degrades single-stranded DNA. This chain is DNA repair protein RAD1 (RAD1), found in Saccharomyces cerevisiae (strain ATCC 204508 / S288c) (Baker's yeast).